The primary structure comprises 238 residues: Protein-lysine N-methyltransferase efm4 (238 aa).

Belongs to the class I-like SAM-binding methyltransferase superfamily. EFM4 family.

The protein localises to the cytoplasm. It localises to the nucleus. Functionally, S-adenosyl-L-methionine-dependent protein-lysine N-methyltransferase that mono- and dimethylates elongation factor 1-alpha at 'Lys-316'. May play a role in intracellular transport. This chain is Protein-lysine N-methyltransferase efm4, found in Schizosaccharomyces pombe (strain 972 / ATCC 24843) (Fission yeast).